A 193-amino-acid chain; its full sequence is LOB domain-containing protein 12 (193 aa).

In terms of domain architecture, LOB spans 7-108 (SPCASCKLLR…MQLAVAQAEI (102 aa)).

This sequence belongs to the LOB domain-containing protein family. As to expression, expressed predominantly in roots, and at low levels in shoots, floral stems and open flowers.

This Arabidopsis thaliana (Mouse-ear cress) protein is LOB domain-containing protein 12 (LBD12).